A 569-amino-acid polypeptide reads, in one-letter code: Protein ste7 (569 aa).

2 disordered regions span residues 195 to 219 (APIT…VNSV) and 255 to 274 (FSVS…SPPI). Positions 198-219 (TTSSATHTSQFSTSSSSSVNSV) are enriched in low complexity. Residues 264 to 274 (PQTPISMSPPI) are compositionally biased toward pro residues.

Belongs to the arrestin family.

Has a role in promoting meiosis whereby it is involved in establishing the mating pheromone signaling pathway. It also has a role in suppressing meiosis until the conjugation process is complete. This chain is Protein ste7 (ste7), found in Schizosaccharomyces pombe (strain 972 / ATCC 24843) (Fission yeast).